A 461-amino-acid chain; its full sequence is Glycine--tRNA ligase (461 aa).

Substrate-binding residues include Arg100 and Glu163. ATP contacts are provided by residues Arg195–Glu197, Phe205–Phe210, Glu282–Leu283, and Gly326–Arg329. Phe210–Glu214 serves as a coordination point for substrate. Glu322 to Gly326 is a binding site for substrate.

Belongs to the class-II aminoacyl-tRNA synthetase family. As to quaternary structure, homodimer.

The protein resides in the cytoplasm. The catalysed reaction is tRNA(Gly) + glycine + ATP = glycyl-tRNA(Gly) + AMP + diphosphate. Functionally, catalyzes the attachment of glycine to tRNA(Gly). The sequence is that of Glycine--tRNA ligase from Corynebacterium glutamicum (strain ATCC 13032 / DSM 20300 / JCM 1318 / BCRC 11384 / CCUG 27702 / LMG 3730 / NBRC 12168 / NCIMB 10025 / NRRL B-2784 / 534).